The primary structure comprises 239 residues: Norbelladine 4'-O-methyltransferase 3 (239 aa).

S-adenosyl-L-methionine is bound by residues V55, E77, 79 to 80 (GV), S85, D103, and A132. Residue D155 coordinates a divalent metal cation. An S-adenosyl-L-methionine-binding site is contributed by D157. Positions 181 and 182 each coordinate a divalent metal cation.

It belongs to the class I-like SAM-binding methyltransferase superfamily. Cation-dependent O-methyltransferase family. Requires Mg(2+) as cofactor.

The enzyme catalyses norbelladine + S-adenosyl-L-methionine = 4'-O-methylnorbelladine + S-adenosyl-L-homocysteine + H(+). Its pathway is alkaloid biosynthesis. Its function is as follows. 4'-O-methyltransferase converting norbelladine to 4'-O-methylnorbelladine. 4'-O-methylnorbelladine is a precursor to all Amaryllidaceae alkaloids such as galanthamine, lycorine and haemanthamine, and including haemanthamine- and crinamine-type alkaloids, promising anticancer agents. This Narcissus aff. pseudonarcissus MK-2014 (Daffodil) protein is Norbelladine 4'-O-methyltransferase 3.